Reading from the N-terminus, the 141-residue chain is Transcription antitermination protein NusB (141 aa).

This sequence belongs to the NusB family.

In terms of biological role, involved in transcription antitermination. Required for transcription of ribosomal RNA (rRNA) genes. Binds specifically to the boxA antiterminator sequence of the ribosomal RNA (rrn) operons. This Desulfotalea psychrophila (strain LSv54 / DSM 12343) protein is Transcription antitermination protein NusB.